A 237-amino-acid chain; its full sequence is Cysteine-rich venom protein DIS1 (237 aa).

The signal sequence occupies residues 1–18 (MFVFILLSLAAVLQQSFG). The SCP domain maps to 37 to 165 (VDKHNAFRRS…SYNYFYVCQY (129 aa)). Intrachain disulfides connect Cys74/Cys152, Cys91/Cys166, Cys147/Cys163, Cys185/Cys192, Cys188/Cys197, Cys201/Cys234, and Cys219/Cys232. Residues 201–234 (CSREDVFMNCKSLVAQSNCQDDYIRKNCPATCFC) enclose the ShKT domain.

This sequence belongs to the CRISP family. In terms of tissue distribution, expressed by the venom gland.

It localises to the secreted. Its function is as follows. Weakly blocks contraction of smooth muscle elicited by high potassium-induced depolarization, but does not block caffeine-stimulated contraction. May target voltage-gated calcium channels on smooth muscle. This is Cysteine-rich venom protein DIS1 from Dispholidus typus (Boomslang).